We begin with the raw amino-acid sequence, 63 residues long: Large ribosomal subunit protein bL32 (63 aa).

This sequence belongs to the bacterial ribosomal protein bL32 family.

This chain is Large ribosomal subunit protein bL32, found in Lacticaseibacillus paracasei (strain ATCC 334 / BCRC 17002 / CCUG 31169 / CIP 107868 / KCTC 3260 / NRRL B-441) (Lactobacillus paracasei).